A 328-amino-acid polypeptide reads, in one-letter code: Interleukin-12 subunit beta (328 aa).

The signal sequence occupies residues methionine 1 to alanine 22. In terms of domain architecture, Ig-like C2-type spans aspartate 29 to lysine 106. A disulfide bond links cysteine 50 and cysteine 90. 4 N-linked (GlcNAc...) asparagine glycosylation sites follow: asparagine 125, asparagine 135, asparagine 222, and asparagine 303. A Fibronectin type-III domain is found at proline 237 to serine 328.

This sequence belongs to the IL-12B family. In terms of assembly, heterodimer with IL12A; disulfide-linked. The heterodimer is known as interleukin IL-12. Heterodimer with IL23A; disulfide-linked. The heterodimer is known as interleukin IL-23. Also secreted as a monomer. Interacts with NBR1; this interaction promotes IL-12 secretion.

It is found in the secreted. Its function is as follows. Cytokine that can act as a growth factor for activated T and NK cells, enhance the lytic activity of NK/lymphokine-activated killer cells, and stimulate the production of IFN-gamma by resting PBMC. In terms of biological role, associates with IL23A to form the IL-23 interleukin, a heterodimeric cytokine which functions in innate and adaptive immunity. IL-23 may constitute with IL-17 an acute response to infection in peripheral tissues. IL-23 binds to a heterodimeric receptor complex composed of IL12RB1 and IL23R, activates the Jak-Stat signaling cascade, stimulates memory rather than naive T-cells and promotes production of pro-inflammatory cytokines. IL-23 induces autoimmune inflammation and thus may be responsible for autoimmune inflammatory diseases and may be important for tumorigenesis. This chain is Interleukin-12 subunit beta (IL12B), found in Papio anubis (Olive baboon).